A 242-amino-acid chain; its full sequence is Pyridoxine 5'-phosphate synthase (242 aa).

Asparagine 7 is a 3-amino-2-oxopropyl phosphate binding site. 9–10 is a 1-deoxy-D-xylulose 5-phosphate binding site; the sequence is DH. Residue arginine 18 coordinates 3-amino-2-oxopropyl phosphate. Histidine 43 serves as the catalytic Proton acceptor. 1-deoxy-D-xylulose 5-phosphate-binding residues include arginine 45 and histidine 50. Residue glutamate 70 is the Proton acceptor of the active site. Position 100 (threonine 100) interacts with 1-deoxy-D-xylulose 5-phosphate. Residue histidine 191 is the Proton donor of the active site. Residues glycine 192 and 213-214 contribute to the 3-amino-2-oxopropyl phosphate site; that span reads GH.

Belongs to the PNP synthase family. In terms of assembly, homooctamer; tetramer of dimers.

It is found in the cytoplasm. It carries out the reaction 3-amino-2-oxopropyl phosphate + 1-deoxy-D-xylulose 5-phosphate = pyridoxine 5'-phosphate + phosphate + 2 H2O + H(+). Its pathway is cofactor biosynthesis; pyridoxine 5'-phosphate biosynthesis; pyridoxine 5'-phosphate from D-erythrose 4-phosphate: step 5/5. Catalyzes the complicated ring closure reaction between the two acyclic compounds 1-deoxy-D-xylulose-5-phosphate (DXP) and 3-amino-2-oxopropyl phosphate (1-amino-acetone-3-phosphate or AAP) to form pyridoxine 5'-phosphate (PNP) and inorganic phosphate. This is Pyridoxine 5'-phosphate synthase from Chromobacterium violaceum (strain ATCC 12472 / DSM 30191 / JCM 1249 / CCUG 213 / NBRC 12614 / NCIMB 9131 / NCTC 9757 / MK).